A 276-amino-acid chain; its full sequence is A-factor receptor protein (276 aa).

Residues 8–68 (VQTWRSIVDA…AIMDEQTSTV (61 aa)) enclose the HTH tetR-type domain. A DNA-binding region (H-T-H motif) is located at residues 31–50 (AISEILRRAKVTKGALYFHF). Residues 207–220 (EKAEREEQEARIAA) are compositionally biased toward basic and acidic residues. Residues 207–276 (EKAEREEQEA…AGVAAGGVVA (70 aa)) form a disordered region. Positions 221-235 (EAKGAGSDAATDSGS) are enriched in low complexity. The segment covering 236-257 (RSGGSGLRGGGSGRGPRAGGAG) has biased composition (gly residues).

Homodimer or multimer. Binds to both DNA and A-factor as a homodimer.

It localises to the cytoplasm. Represses adpA expression by binding to the promoter region in the absence of A-factor, causing repression of streptomycin production and of sporulation. In Streptomyces griseus, this protein is A-factor receptor protein (arpA).